We begin with the raw amino-acid sequence, 139 residues long: D-ribose pyranase (139 aa).

The active-site Proton donor is histidine 20. Residues aspartate 28, histidine 106, and 128-130 each bind substrate; that span reads YAN.

The protein belongs to the RbsD / FucU family. RbsD subfamily. Homodecamer.

It localises to the cytoplasm. It carries out the reaction beta-D-ribopyranose = beta-D-ribofuranose. Its pathway is carbohydrate metabolism; D-ribose degradation; D-ribose 5-phosphate from beta-D-ribopyranose: step 1/2. Catalyzes the interconversion of beta-pyran and beta-furan forms of D-ribose. In Edwardsiella ictaluri (strain 93-146), this protein is D-ribose pyranase.